The following is a 119-amino-acid chain: Non-specific lipid-transfer protein 11 (119 aa).

A signal peptide spans 1–28; that stretch reads MRNITTTTRKMLLLVITILLGIAYHGEA. 4 cysteine pairs are disulfide-bonded: cysteine 31-cysteine 78, cysteine 41-cysteine 55, cysteine 56-cysteine 101, and cysteine 76-cysteine 115.

The protein belongs to the plant LTP family.

Functionally, plant non-specific lipid-transfer proteins transfer phospholipids as well as galactolipids across membranes. May play a role in wax or cutin deposition in the cell walls of expanding epidermal cells and certain secretory tissues. The chain is Non-specific lipid-transfer protein 11 (LTP11) from Arabidopsis thaliana (Mouse-ear cress).